The primary structure comprises 345 residues: Galacturonate transporter (345 aa).

The first 32 residues, 1–32, serve as a signal peptide directing secretion; the sequence is MFKIKGLRWYMIGLVTIGTVLGYLTRNAIAAA. 8 helical membrane-spanning segments follow: residues 49–69, 76–96, 100–120, 139–159, 165–185, 237–257, 265–285, and 304–324; these read YIIA…GYVL, VGYA…ALAN, GLAV…PAGL, FNVG…WAIM, MAFL…LYFY, FLAE…MFKA, IAMF…LGGY, and LVVT…LFTS.

This sequence belongs to the major facilitator superfamily. Phthalate permease family.

Its subcellular location is the cell inner membrane. The catalysed reaction is aldehydo-D-galacturonate(out) + H(+)(out) = aldehydo-D-galacturonate(in) + H(+)(in). With respect to regulation, inhibited by cyanide and 2,4-dinitrophenol, but not by arsenate. Functionally, transport of D-galacturonate. Cannot transport the dimer digalacturonic acid. Uptake is an active process. The sequence is that of Galacturonate transporter from Dickeya chrysanthemi (Pectobacterium chrysanthemi).